The following is a 102-amino-acid chain: Co-chaperonin GroES (102 aa).

This sequence belongs to the GroES chaperonin family. Heptamer of 7 subunits arranged in a ring. Interacts with the chaperonin GroEL.

The protein resides in the cytoplasm. Its function is as follows. Together with the chaperonin GroEL, plays an essential role in assisting protein folding. The GroEL-GroES system forms a nano-cage that allows encapsulation of the non-native substrate proteins and provides a physical environment optimized to promote and accelerate protein folding. GroES binds to the apical surface of the GroEL ring, thereby capping the opening of the GroEL channel. The chain is Co-chaperonin GroES from Vibrio harveyi (Beneckea harveyi).